A 149-amino-acid chain; its full sequence is D-aminoacyl-tRNA deacylase (149 aa).

The short motif at 138 to 139 (GP) is the Gly-cisPro motif, important for rejection of L-amino acids element.

The protein belongs to the DTD family. As to quaternary structure, homodimer.

The protein localises to the cytoplasm. It catalyses the reaction glycyl-tRNA(Ala) + H2O = tRNA(Ala) + glycine + H(+). It carries out the reaction a D-aminoacyl-tRNA + H2O = a tRNA + a D-alpha-amino acid + H(+). An aminoacyl-tRNA editing enzyme that deacylates mischarged D-aminoacyl-tRNAs. Also deacylates mischarged glycyl-tRNA(Ala), protecting cells against glycine mischarging by AlaRS. Acts via tRNA-based rather than protein-based catalysis; rejects L-amino acids rather than detecting D-amino acids in the active site. By recycling D-aminoacyl-tRNA to D-amino acids and free tRNA molecules, this enzyme counteracts the toxicity associated with the formation of D-aminoacyl-tRNA entities in vivo and helps enforce protein L-homochirality. The sequence is that of D-aminoacyl-tRNA deacylase from Chlorobaculum parvum (strain DSM 263 / NCIMB 8327) (Chlorobium vibrioforme subsp. thiosulfatophilum).